A 407-amino-acid chain; its full sequence is MKQKTSLFARLADGSLVLQILVGIVAGVILATVSKSGAESVAFLGELFVGALKAIAPILVFILVAASIANQKKNAKTNMRPIVILYLFGTFSAAVTAVLMSFLFPTTLALSLDAAQASPPEGIGEVIHTLLFQLVDNPVNAVLTGNYIGILAWGVGLGLALHHATDSTKQVFADVSHGVSQMVRFIIRLAPIGIFGLVSATFATTGFTAIAGYMHLLLVLLAAMAIMALIINPAIVYFKIRRNPYPLVFTCLRESGVTAFFTRSSAANIPVNMALCEKLKLHEDTYSVSIPLGATINMGGAAITITILTLAAANTMGIQVDLLTAILLSVVAGVSACGASGVAGGSLLLIPLACSLFGISNDVAMQVVAVGFIIGVIQDSAETGLNSSTDVIFTAAACEAAERKENA.

The next 9 membrane-spanning stretches (helical) occupy residues 14-34, 48-68, 82-102, 141-161, 192-212, 216-236, 290-310, 316-336, and 363-383; these read GSLVLQILVGIVAGVILATVS, FVGALKAIAPILVFILVAASI, IVILYLFGTFSAAVTAVLMSF, AVLTGNYIGILAWGVGLGLAL, IGIFGLVSATFATTGFTAIAG, LLLVLLAAMAIMALIINPAIV, IPLGATINMGGAAITITILTL, MGIQVDLLTAILLSVVAGVSA, and VAMQVVAVGFIIGVIQDSAET.

Belongs to the dicarboxylate/amino acid:cation symporter (DAACS) (TC 2.A.23) family.

The protein localises to the cell inner membrane. It catalyses the reaction L-serine(in) + Na(+)(in) = L-serine(out) + Na(+)(out). The catalysed reaction is L-threonine(in) + Na(+)(in) = L-threonine(out) + Na(+)(out). In terms of biological role, involved in the import of serine and threonine into the cell, with the concomitant import of sodium (symport system). The polypeptide is Serine/threonine transporter SstT (Shewanella halifaxensis (strain HAW-EB4)).